Here is a 276-residue protein sequence, read N- to C-terminus: Large ribosomal subunit protein uL2 (276 aa).

Residues 221-276 form a disordered region; that stretch reads RGSAMNPNDHPHGGGEGRAPIGRKSPMTPWGKKARGVKTRDRKKASNALIIRRRTK. Residues 252–276 show a composition bias toward basic residues; sequence KKARGVKTRDRKKASNALIIRRRTK.

Belongs to the universal ribosomal protein uL2 family. In terms of assembly, part of the 50S ribosomal subunit. Forms a bridge to the 30S subunit in the 70S ribosome.

In terms of biological role, one of the primary rRNA binding proteins. Required for association of the 30S and 50S subunits to form the 70S ribosome, for tRNA binding and peptide bond formation. It has been suggested to have peptidyltransferase activity; this is somewhat controversial. Makes several contacts with the 16S rRNA in the 70S ribosome. The polypeptide is Large ribosomal subunit protein uL2 (Onion yellows phytoplasma (strain OY-M)).